We begin with the raw amino-acid sequence, 855 residues long: DNA mismatch repair protein MutS (855 aa).

616–623 (GPNMGGKS) provides a ligand contact to ATP.

Belongs to the DNA mismatch repair MutS family.

This protein is involved in the repair of mismatches in DNA. It is possible that it carries out the mismatch recognition step. This protein has a weak ATPase activity. The chain is DNA mismatch repair protein MutS from Salmonella newport (strain SL254).